A 387-amino-acid chain; its full sequence is Carboxyaminopropylagmatine decarboxylase (387 aa).

Lys-52 carries the post-translational modification N6-(pyridoxal phosphate)lysine.

This sequence belongs to the Orn/Lys/Arg decarboxylase class-II family. Requires pyridoxal 5'-phosphate as cofactor.

It carries out the reaction N(1)-[(S)-3-amino-3-carboxypropyl]agmatine + H(+) = N(1)-(3-aminopropyl)agmatine + CO2. The protein operates within amine and polyamine biosynthesis; spermidine biosynthesis. Its function is as follows. Decarboxylase involved in the biosynthesis of spermidine via the carboxyaminopropylagmatine (CAPA) pathway. Catalyzes the decarboxylation of CAPA to form aminopropylagmatine (APA). Can also decarboxylate carboxyspermidine and carboxynorspermidine, but not ornithine, arginine, lysine and meso-diaminopimelate. The sequence is that of Carboxyaminopropylagmatine decarboxylase from Synechocystis sp. (strain ATCC 27184 / PCC 6803 / Kazusa).